The sequence spans 160 residues: Lymphocyte antigen 96 (160 aa).

The first 18 residues, 1-18, serve as a signal peptide directing secretion; it reads MLPFLFFSTLFSSIFTEA. 3 disulfide bridges follow: cysteine 25–cysteine 51, cysteine 37–cysteine 148, and cysteine 95–cysteine 105. A glycan (N-linked (GlcNAc...) asparagine) is linked at asparagine 26. Asparagine 114 carries an N-linked (GlcNAc...) asparagine glycan. Positions 119 to 123 are interaction with lipopolysaccharide; it reads FSFKG.

In terms of assembly, heterogeneous homomer formed from homodimers; disulfide-linked. Belongs to the lipopolysaccharide (LPS) receptor, a multi-protein complex containing at least CD14, LY96 and TLR4. Binds to the extracellular domains of TLR2 and TLR4. Ligand binding induces interaction with TLR4 and oligomerization of the complex. In terms of processing, N-glycosylated; high-mannose.

The protein resides in the secreted. Its subcellular location is the extracellular space. Functionally, binds bacterial lipopolysaccharide (LPS). Cooperates with TLR4 in the innate immune response to bacterial lipopolysaccharide (LPS), and with TLR2 in the response to cell wall components from Gram-positive and Gram-negative bacteria. Enhances TLR4-dependent activation of NF-kappa-B. Cells expressing both LY96 and TLR4, but not TLR4 alone, respond to LPS. The chain is Lymphocyte antigen 96 (LY96) from Homo sapiens (Human).